The primary structure comprises 24 residues: Brevinin-1R (24 aa).

A disulfide bridge connects residues C18 and C24.

Expressed by the skin glands.

The protein localises to the secreted. Functionally, antimicrobial peptide. This Pelophylax ridibundus (Marsh frog) protein is Brevinin-1R.